A 310-amino-acid chain; its full sequence is Protein N-terminal asparagine amidohydrolase (310 aa).

Monomer.

The protein localises to the cytoplasm. The catalysed reaction is N-terminal L-asparaginyl-[protein] + H2O + H(+) = N-terminal L-aspartyl-[protein] + NH4(+). N-terminal asparagine deamidase that mediates deamidation of N-terminal asparagine residues to aspartate. Required for the ubiquitin-dependent turnover of intracellular proteins that initiate with Met-Asn. These proteins are acetylated on the retained initiator methionine and can subsequently be modified by the removal of N-acetyl methionine by acylaminoacid hydrolase (AAH). Conversion of the resulting N-terminal asparagine to aspartate by NTAN1/PNAD renders the protein susceptible to arginylation, polyubiquitination and degradation as specified by the N-end rule. This enzyme does not act on substrates with internal or C-terminal asparagines and does not act on glutamine residues in any position. The chain is Protein N-terminal asparagine amidohydrolase from Mus musculus (Mouse).